The sequence spans 312 residues: Putative HTH-type transcriptional regulatory protein Ta1363 (312 aa).

The region spanning 133-186 (LREMRMKMSLSIGYLSHYLGVSRRSVSLYENGSSATIDVFLKLQEIIKSDLVDH) is the HTH cro/C1-type domain. Positions 144 to 163 (IGYLSHYLGVSRRSVSLYEN) form a DNA-binding region, H-T-H motif.

The protein is Putative HTH-type transcriptional regulatory protein Ta1363 of Thermoplasma acidophilum (strain ATCC 25905 / DSM 1728 / JCM 9062 / NBRC 15155 / AMRC-C165).